The sequence spans 248 residues: tRNA pseudouridine synthase A (248 aa).

The active-site Nucleophile is the Asp53. Tyr111 contacts substrate.

The protein belongs to the tRNA pseudouridine synthase TruA family. As to quaternary structure, homodimer.

The catalysed reaction is uridine(38/39/40) in tRNA = pseudouridine(38/39/40) in tRNA. Formation of pseudouridine at positions 38, 39 and 40 in the anticodon stem and loop of transfer RNAs. This is tRNA pseudouridine synthase A from Streptococcus thermophilus (strain CNRZ 1066).